The following is a 396-amino-acid chain: 8-amino-7-oxononanoate synthase (396 aa).

Arg19 contributes to the substrate binding site. 106-107 (GY) lines the pyridoxal 5'-phosphate pocket. Position 131 (His131) interacts with substrate. The pyridoxal 5'-phosphate site is built by Ser176, His204, and Thr233. At Lys236 the chain carries N6-(pyridoxal phosphate)lysine. Thr350 contacts substrate.

This sequence belongs to the class-II pyridoxal-phosphate-dependent aminotransferase family. BioF subfamily. In terms of assembly, homodimer. The cofactor is pyridoxal 5'-phosphate.

The enzyme catalyses 6-carboxyhexanoyl-[ACP] + L-alanine + H(+) = (8S)-8-amino-7-oxononanoate + holo-[ACP] + CO2. Its pathway is cofactor biosynthesis; biotin biosynthesis. Functionally, catalyzes the decarboxylative condensation of pimeloyl-[acyl-carrier protein] and L-alanine to produce 8-amino-7-oxononanoate (AON), [acyl-carrier protein], and carbon dioxide. The sequence is that of 8-amino-7-oxononanoate synthase from Pseudomonas savastanoi pv. phaseolicola (strain 1448A / Race 6) (Pseudomonas syringae pv. phaseolicola (strain 1448A / Race 6)).